The primary structure comprises 339 residues: Adenylosuccinate synthetase (339 aa).

GTP is bound by residues 12–18 and 42–44; these read GDEGKGS and GHS. Catalysis depends on aspartate 13, which acts as the Proton acceptor. Mg(2+) contacts are provided by aspartate 13 and glycine 42. IMP contacts are provided by residues 13–16, 40–43, threonine 127, arginine 141, glutamine 179, threonine 194, and arginine 256; these read DEGK and NAGH. Histidine 43 acts as the Proton donor in catalysis. A substrate-binding site is contributed by 252–258; that stretch reads TVTGRRR. GTP-binding positions include arginine 258, 284–286, and 324–326; these read MLD and KTG.

The protein belongs to the adenylosuccinate synthetase family. Homodimer. Requires Mg(2+) as cofactor.

The protein localises to the cytoplasm. The enzyme catalyses IMP + L-aspartate + GTP = N(6)-(1,2-dicarboxyethyl)-AMP + GDP + phosphate + 2 H(+). The protein operates within purine metabolism; AMP biosynthesis via de novo pathway; AMP from IMP: step 1/2. Its function is as follows. Plays an important role in the de novo pathway of purine nucleotide biosynthesis. Catalyzes the first committed step in the biosynthesis of AMP from IMP. This Thermococcus sibiricus (strain DSM 12597 / MM 739) protein is Adenylosuccinate synthetase.